Here is a 379-residue protein sequence, read N- to C-terminus: Retron Se72 reverse transcriptase (379 aa).

In terms of domain architecture, Reverse transcriptase spans 1-245 (MNKPRFNGTP…SKLSVTGLWV (245 aa)). Residues Asp109, Asp188, and Asp189 each contribute to the Mg(2+) site.

Belongs to the bacterial reverse transcriptase family.

It carries out the reaction DNA(n) + a 2'-deoxyribonucleoside 5'-triphosphate = DNA(n+1) + diphosphate. Reverse transcriptase (RT) component of antiviral defense system retron Se72, composed of a non-coding RNA (ncRNA), this reverse transcriptase (RT) and the following cold shock-like protein. Expression of retron Se72 confers protection against bacteriophage lambda. At multiplicity of infection (MOI) of 0.02 cultures slow growth when infected with lambda but do not collapse, at MOI 2 cultures enter growth stasis. Responsible for synthesis of msDNA (a branched molecule with RNA linked by a 2',5'-phosphodiester bond to ssDNA). The retron transcript serves as primer (from a conserved internal G residue) and template for the reaction, and codes for the RT. The DNA segment is predicted to be 72 bases long. In Salmonella heidelberg (strain 579083-10), this protein is Retron Se72 reverse transcriptase.